Reading from the N-terminus, the 600-residue chain is Jacalin-related lectin 18 (600 aa).

Jacalin-type lectin domains lie at 12–158 (TQRL…YFTC), 161–303 (PTRM…YFTT), 304–447 (SPFI…YFRL), and 454–597 (GEKV…HVLP).

Belongs to the jacalin lectin family.

The chain is Jacalin-related lectin 18 (JAL18) from Arabidopsis thaliana (Mouse-ear cress).